The following is a 157-amino-acid chain: UPF0179 protein Mhun_1135 (157 aa).

Belongs to the UPF0179 family.

The sequence is that of UPF0179 protein Mhun_1135 from Methanospirillum hungatei JF-1 (strain ATCC 27890 / DSM 864 / NBRC 100397 / JF-1).